The sequence spans 127 residues: LIM domain-containing protein 2 (127 aa).

Met1 is modified (N-acetylmethionine). The interval Met1–Val24 is disordered. The LIM zinc-binding domain occupies Glu38 to Ser98. 8 residues coordinate Zn(2+): Cys40, Cys43, His61, Cys64, Cys67, Cys70, Cys88, and His91.

In terms of assembly, interacts with ILK.

It is found in the cytoplasm. It localises to the nucleus. Acts as an activator of the protein-kinase ILK, thereby regulating cell motility. The polypeptide is LIM domain-containing protein 2 (Homo sapiens (Human)).